The sequence spans 424 residues: Histidine--tRNA ligase (424 aa).

This sequence belongs to the class-II aminoacyl-tRNA synthetase family. As to quaternary structure, homodimer.

It localises to the cytoplasm. The catalysed reaction is tRNA(His) + L-histidine + ATP = L-histidyl-tRNA(His) + AMP + diphosphate + H(+). The protein is Histidine--tRNA ligase (hisS) of Bacillus subtilis (strain 168).